A 1408-amino-acid chain; its full sequence is DNA-directed RNA polymerase subunit beta (1408 aa).

Residues Pro1383–Ala1408 are disordered. Basic and acidic residues predominate over residues Gly1399–Ala1408.

This sequence belongs to the RNA polymerase beta chain family. As to quaternary structure, the RNAP catalytic core consists of 2 alpha, 1 beta, 1 beta' and 1 omega subunit. When a sigma factor is associated with the core the holoenzyme is formed, which can initiate transcription.

It carries out the reaction RNA(n) + a ribonucleoside 5'-triphosphate = RNA(n+1) + diphosphate. In terms of biological role, DNA-dependent RNA polymerase catalyzes the transcription of DNA into RNA using the four ribonucleoside triphosphates as substrates. The sequence is that of DNA-directed RNA polymerase subunit beta from Myxococcus xanthus (strain DK1622).